The chain runs to 540 residues: Glucose-6-phosphate isomerase (540 aa).

The active-site Proton donor is the glutamate 350. Active-site residues include histidine 381 and lysine 503.

The protein belongs to the GPI family.

It is found in the cytoplasm. The enzyme catalyses alpha-D-glucose 6-phosphate = beta-D-fructose 6-phosphate. The protein operates within carbohydrate biosynthesis; gluconeogenesis. Its pathway is carbohydrate degradation; glycolysis; D-glyceraldehyde 3-phosphate and glycerone phosphate from D-glucose: step 2/4. Its function is as follows. Catalyzes the reversible isomerization of glucose-6-phosphate to fructose-6-phosphate. The polypeptide is Glucose-6-phosphate isomerase (Burkholderia lata (strain ATCC 17760 / DSM 23089 / LMG 22485 / NCIMB 9086 / R18194 / 383)).